The following is a 311-amino-acid chain: Pyrimidine-specific ribonucleoside hydrolase RihA (311 aa).

Residue H240 is part of the active site.

The protein belongs to the IUNH family. RihA subfamily.

Hydrolyzes with equal efficiency cytidine or uridine to ribose and cytosine or uracil, respectively. In Escherichia coli O7:K1 (strain IAI39 / ExPEC), this protein is Pyrimidine-specific ribonucleoside hydrolase RihA.